Consider the following 201-residue polypeptide: 3-isopropylmalate dehydratase small subunit (201 aa).

It belongs to the LeuD family. LeuD type 1 subfamily. Heterodimer of LeuC and LeuD.

The catalysed reaction is (2R,3S)-3-isopropylmalate = (2S)-2-isopropylmalate. Its pathway is amino-acid biosynthesis; L-leucine biosynthesis; L-leucine from 3-methyl-2-oxobutanoate: step 2/4. Its function is as follows. Catalyzes the isomerization between 2-isopropylmalate and 3-isopropylmalate, via the formation of 2-isopropylmaleate. The sequence is that of 3-isopropylmalate dehydratase small subunit from Brucella abortus (strain S19).